Consider the following 477-residue polypeptide: Aspartyl/glutamyl-tRNA(Asn/Gln) amidotransferase subunit B (477 aa).

Belongs to the GatB/GatE family. GatB subfamily. In terms of assembly, heterotrimer of A, B and C subunits.

The enzyme catalyses L-glutamyl-tRNA(Gln) + L-glutamine + ATP + H2O = L-glutaminyl-tRNA(Gln) + L-glutamate + ADP + phosphate + H(+). It carries out the reaction L-aspartyl-tRNA(Asn) + L-glutamine + ATP + H2O = L-asparaginyl-tRNA(Asn) + L-glutamate + ADP + phosphate + 2 H(+). Functionally, allows the formation of correctly charged Asn-tRNA(Asn) or Gln-tRNA(Gln) through the transamidation of misacylated Asp-tRNA(Asn) or Glu-tRNA(Gln) in organisms which lack either or both of asparaginyl-tRNA or glutaminyl-tRNA synthetases. The reaction takes place in the presence of glutamine and ATP through an activated phospho-Asp-tRNA(Asn) or phospho-Glu-tRNA(Gln). The chain is Aspartyl/glutamyl-tRNA(Asn/Gln) amidotransferase subunit B from Coxiella burnetii (strain CbuK_Q154) (Coxiella burnetii (strain Q154)).